The primary structure comprises 151 residues: Conidium-specific protein (151 aa).

The interval 1–72 (MAKPHCSSRS…FSGDPDSEVE (72 aa)) is disordered. Basic and acidic residues predominate over residues 48–60 (RKDNSADKGDTLR).

The polypeptide is Conidium-specific protein (SpoC1-C1D) (Emericella nidulans (strain FGSC A4 / ATCC 38163 / CBS 112.46 / NRRL 194 / M139) (Aspergillus nidulans)).